The sequence spans 929 residues: Urea transporter 2 (929 aa).

Residues 1–11 (MSDHPLKEMSD) show a composition bias toward basic and acidic residues. Residues 1 to 89 (MSDHPLKEMS…KRRESELPRR (89 aa)) are disordered. Low complexity predominate over residues 31-42 (SELSSPTWPSSS). Basic and acidic residues predominate over residues 55–88 (PEEKDLRSSDEDSHIVKIEKPNERSKRRESELPR). The next 9 membrane-spanning stretches (helical) occupy residues 133–155 (GAAQ…GLLI), 162–179 (IAGA…LALS), 184–204 (AIAS…VAVF), 212–232 (WWLL…SSAL), 241–261 (LPVF…ATGH), 310–330 (GGVI…HAAI), 349–371 (IYTG…MFYV), 378–399 (LLAL…NMMA), and 400–420 (VVGV…FLLL). The tract at residues 451–480 (SDEQKPPNGGGGEQSHGGGQRKAEEGSETV) is disordered. The segment covering 458 to 470 (NGGGGEQSHGGGQ) has biased composition (gly residues). Phosphoserine is present on S486. The next 4 membrane-spanning stretches (helical) occupy residues 609 to 629 (GILI…SGCL), 647 to 667 (AIAA…MAVF), 675 to 695 (WWLL…SSAL), and 704 to 724 (LPVF…ATGH). A glycan (N-linked (GlcNAc...) asparagine) is linked at N742. Helical transmembrane passes span 773-793 (GGIF…HAAI), 812-832 (IYFG…GGMF), 841-861 (LLAI…ANML), and 863-883 (VFGL…FLLL).

Belongs to the urea transporter family. As to quaternary structure, interacts with SNAPIN which enhances its urea transport activity. In terms of tissue distribution, expressed in the inner medulla of the kidney. Expressed in both the inner and outer renal medulla of the kidney.

The protein localises to the apical cell membrane. It localises to the cell membrane. It carries out the reaction urea(in) = urea(out). Its activity is regulated as follows. Inhibited by phloretin. Activated by vasopressin, forskolin, 3-isobutyl-1-methylxanthine (IBMX) and cAMP. Inhibited by phloretin. With respect to regulation, inhibited by urea analogs and phloretin and activated by forskolin. Its activity is regulated as follows. Inhibited by phloretin and activated by forskolin. Functionally, mediates the transport of urea driven by a concentration gradient across the cell membrane of the kidney inner medullary collecting duct which is critical to the urinary concentrating mechanism. This chain is Urea transporter 2 (Slc14a2), found in Rattus norvegicus (Rat).